The following is a 664-amino-acid chain: Macoilin (664 aa).

Transmembrane regions (helical) follow at residues 28–48 (TFLY…DFVL), 75–95 (AFSV…LLFI), 120–140 (VCLP…AIRF), and 154–174 (FAAH…KSYV). The span at 253–265 (REKGKEKDKDAKK) shows a compositional bias: basic and acidic residues. The disordered stretch occupies residues 253–274 (REKGKEKDKDAKKHNLGINNNN). Ser305 bears the Phosphoserine mark. Over residues 320-348 (KNYKNASGVVNSSPRSHSATNGSIPSSSS) the composition is skewed to polar residues. The tract at residues 320–375 (KNYKNASGVVNSSPRSHSATNGSIPSSSSKNEKKQKCTSKGPSAHKDLMENCIPNN) is disordered. Residue Asn324 is glycosylated (N-linked (GlcNAc...) asparagine). Ser332 carries the phosphoserine modification. N-linked (GlcNAc...) asparagine glycans are attached at residues Asn340 and Asn452. The segment at 630–664 (TSPLSPVSPHYSSKFVETSPSGLDPNASVYQPLKK) is disordered. Ser631 and Ser634 each carry phosphoserine. Asn655 is a glycosylation site (N-linked (GlcNAc...) asparagine).

This sequence belongs to the macoilin family. Strong expression in whole nervous system up to 12.5 dpc. Highly expressed in all neuronal differentiation fields from 14.5 dpc to birth, with highest expression in the telencephalic cortical plate and mitral cells in the olfactory bulb, and lower expression in neuronal progenitor zones. Progressively decreased expression in fields of neuron precursor proliferation from 14.5 dpc and virtually undetectable there by 17.5 dpc. No significant expression detected outside the nervous system. After birth, significant expression remains in the cerebellum, olfactory bulb and hippocampus.

The protein resides in the rough endoplasmic reticulum membrane. Its subcellular location is the nucleus membrane. Plays a role in the regulation of neuronal activity. The protein is Macoilin (Maco1) of Mus musculus (Mouse).